The sequence spans 353 residues: Cyclic GMP-AMP synthase-like receptor (353 aa).

Residues S60 and 72 to 74 (EYD) contribute to the ATP site. Residues E72, D74, and D183 each coordinate Mg(2+). D183 provides a ligand contact to GTP. K245 contacts ATP. The Mn(2+) site is built by L269 and E270.

The protein belongs to the mab-21 family. It depends on Mg(2+) as a cofactor. Requires Mn(2+) as cofactor.

It catalyses the reaction GTP + ATP = 2',3'-cGAMP + 2 diphosphate. It carries out the reaction GTP + ATP = pppGp(2'-5')A + diphosphate. The enzyme catalyses pppGp(2'-5')A = 2',3'-cGAMP + diphosphate. In terms of biological role, nucleotidyltransferase that catalyzes the formation of cyclic GMP-AMP (2',3'-cGAMP) from ATP and GTP and plays a key role in innate immunity. Acts as a key sensor of double-stranded RNA (dsRNA), the presence of dsRNA in the cytoplasm being a danger signal that triggers the immune responses. Directly binds dsRNA, activating the nucleotidyltransferase activity, leading to synthesis of 2',3'-cGAMP, a second messenger that binds to and activates Sting, thereby triggering the immune response via activation of the NF-kappa-B transcription factor. In Nicrophorus vespilloides (Boreal carrion beetle), this protein is Cyclic GMP-AMP synthase-like receptor.